The sequence spans 290 residues: 33 kDa chaperonin (290 aa).

2 disulfides stabilise this stretch: cysteine 235–cysteine 237 and cysteine 268–cysteine 271.

Belongs to the HSP33 family. In terms of processing, under oxidizing conditions two disulfide bonds are formed involving the reactive cysteines. Under reducing conditions zinc is bound to the reactive cysteines and the protein is inactive.

The protein localises to the cytoplasm. Redox regulated molecular chaperone. Protects both thermally unfolding and oxidatively damaged proteins from irreversible aggregation. Plays an important role in the bacterial defense system toward oxidative stress. This is 33 kDa chaperonin from Streptococcus pneumoniae (strain JJA).